The chain runs to 58 residues: Teratocyte protein CftICK-III (58 aa).

The first 24 residues, 1–24 (MQKFMRLFFLGLFFILFMTTQIKA), serve as a signal peptide directing secretion. Intrachain disulfides connect C27–C42, C34–C47, and C41–C55.

As to expression, abundantly expressed by teratocytes, which are extra-embryonic cells released by parasitoid wasps into their hosts during larval eclosion.

It is found in the secreted. Its function is as follows. This endoparasitoid wasp peptide has immununosuppressive and insecticidal activities. Suppress cellular immunity which is detectable as a reduction of hemocyte encapsulation in the host. In vivo, ingestion of this peptide (probably at excessive doses) increases larval mortality and reduces leaf consumption in both lepidopteran species D.saccharalis and S.frugiperda, which are permissive and non-permissive hosts for C.flavipes, respectively. The polypeptide is Teratocyte protein CftICK-III (Cotesia flavipes (Parasitic wasp)).